Here is a 497-residue protein sequence, read N- to C-terminus: ATP synthase subunit alpha 2 (497 aa).

ATP is bound at residue 167–174; that stretch reads GERATGKT.

It belongs to the ATPase alpha/beta chains family. In terms of assembly, F-type ATPases have 2 components, CF(1) - the catalytic core - and CF(0) - the membrane proton channel. CF(1) has five subunits: alpha(3), beta(3), gamma(1), delta(1), epsilon(1). CF(0) has four main subunits: a(1), b(1), b'(1) and c(9-12).

It localises to the cell inner membrane. The catalysed reaction is ATP + H2O + 4 H(+)(in) = ADP + phosphate + 5 H(+)(out). Functionally, produces ATP from ADP in the presence of a proton gradient across the membrane. The alpha chain is a regulatory subunit. The sequence is that of ATP synthase subunit alpha 2 from Cereibacter sphaeroides (strain ATCC 17023 / DSM 158 / JCM 6121 / CCUG 31486 / LMG 2827 / NBRC 12203 / NCIMB 8253 / ATH 2.4.1.) (Rhodobacter sphaeroides).